Consider the following 264-residue polypeptide: Taurine import ATP-binding protein TauB (264 aa).

The region spanning leucine 4 to alanine 233 is the ABC transporter domain. ATP is bound at residue glycine 38 to threonine 45.

This sequence belongs to the ABC transporter superfamily. Taurine importer (TC 3.A.1.17.1) family. The complex is composed of two ATP-binding proteins (TauB), two transmembrane proteins (TauC) and a solute-binding protein (TauA).

Its subcellular location is the cell inner membrane. The enzyme catalyses taurine(out) + ATP + H2O = taurine(in) + ADP + phosphate + H(+). Part of the ABC transporter complex TauABC involved in taurine import. Responsible for energy coupling to the transport system. This Pseudomonas fluorescens (strain ATCC BAA-477 / NRRL B-23932 / Pf-5) protein is Taurine import ATP-binding protein TauB.